Reading from the N-terminus, the 231-residue chain is Albumin-2 (231 aa).

4 Hemopexin repeats span residues 4–55 (TGYI…FKSL), 62–112 (SYGV…FPFF), 118–166 (ENGI…FPCF), and 172–223 (ESGT…WPSL). Asn8, Asp66, Asp122, and Asp176 together coordinate Ca(2+).

Monomer and homodimer.

It is found in the cytoplasm. The protein localises to the cytosol. Functionally, may play a role in response to oxidative stress and polyamine biosynthesis. This is Albumin-2 from Pisum sativum (Garden pea).